The chain runs to 228 residues: Phosphoribosylformylglycinamidine synthase subunit PurQ (228 aa).

The region spanning 3–226 is the Glutamine amidotransferase type-1 domain; that stretch reads FAVIVFPGSN…VNYWRETHVV (224 aa). The active-site Nucleophile is the Cys-86. Catalysis depends on residues His-195 and Glu-197.

In terms of assembly, part of the FGAM synthase complex composed of 1 PurL, 1 PurQ and 2 PurS subunits.

Its subcellular location is the cytoplasm. It carries out the reaction N(2)-formyl-N(1)-(5-phospho-beta-D-ribosyl)glycinamide + L-glutamine + ATP + H2O = 2-formamido-N(1)-(5-O-phospho-beta-D-ribosyl)acetamidine + L-glutamate + ADP + phosphate + H(+). The catalysed reaction is L-glutamine + H2O = L-glutamate + NH4(+). It functions in the pathway purine metabolism; IMP biosynthesis via de novo pathway; 5-amino-1-(5-phospho-D-ribosyl)imidazole from N(2)-formyl-N(1)-(5-phospho-D-ribosyl)glycinamide: step 1/2. Part of the phosphoribosylformylglycinamidine synthase complex involved in the purines biosynthetic pathway. Catalyzes the ATP-dependent conversion of formylglycinamide ribonucleotide (FGAR) and glutamine to yield formylglycinamidine ribonucleotide (FGAM) and glutamate. The FGAM synthase complex is composed of three subunits. PurQ produces an ammonia molecule by converting glutamine to glutamate. PurL transfers the ammonia molecule to FGAR to form FGAM in an ATP-dependent manner. PurS interacts with PurQ and PurL and is thought to assist in the transfer of the ammonia molecule from PurQ to PurL. This chain is Phosphoribosylformylglycinamidine synthase subunit PurQ, found in Geobacillus thermodenitrificans (strain NG80-2).